The chain runs to 430 residues: MKTTIKQAKDHLNQDVTIGAWLTNKRSSGKIAFLQLRDGTGFMQGVVVKSEVDEEVFKLAKEIAQESSLYVTGTITEDNRSDLGYEMQVKSIEVISEAHDYPITPKNHGTEFLMDHRHLWLRSKKQHAVMKIRNEVIRATYEFFNKDGFTKVDPPILTASAPEGTSELFHTKYFDQDAFLSQSGQLYLEAAAMAHGKVFSFGPTFRAEKSKTRRHLIEFWMIEGEMAFTNHAESLEIQEQYVTHVVKSVLENCKLELKILERDTSKLEKVATPFPRISYDDAIEFLKAEGFDDIEWGEDFGAPHETAIANHYDLPVFITNYPTKIKPFYMQPNPENEETVLCADLIAPEGYGEIIGGSERVDDLELLEQRVKEHGLDEEAYSYYLDLRRYGSVPHCGFGLGLERTVAWISGVEHVRETAPFPRLLNRLYP.

The protein belongs to the class-II aminoacyl-tRNA synthetase family. In terms of assembly, homodimer.

It localises to the cytoplasm. The enzyme catalyses tRNA(Asn) + L-asparagine + ATP = L-asparaginyl-tRNA(Asn) + AMP + diphosphate + H(+). This is Asparagine--tRNA ligase from Staphylococcus aureus (strain JH1).